A 151-amino-acid chain; its full sequence is UPF0756 membrane protein HSM_1471 (151 aa).

Helical transmembrane passes span 1-21 (MSLQ…LGVL), 52-72 (YGVN…IVSG), 81-101 (ALIH…AWFG), and 123-143 (ILGV…AGIL).

It belongs to the UPF0756 family.

The protein localises to the cell membrane. This Histophilus somni (strain 2336) (Haemophilus somnus) protein is UPF0756 membrane protein HSM_1471.